A 146-amino-acid chain; its full sequence is Transcription antitermination protein NusB (146 aa).

It belongs to the NusB family.

In terms of biological role, involved in transcription antitermination. Required for transcription of ribosomal RNA (rRNA) genes. Binds specifically to the boxA antiterminator sequence of the ribosomal RNA (rrn) operons. The protein is Transcription antitermination protein NusB of Koribacter versatilis (strain Ellin345).